Here is a 325-residue protein sequence, read N- to C-terminus: GMP reductase (325 aa).

Cys-174 functions as the Thioimidate intermediate in the catalytic mechanism. 203–226 is an NADP(+) binding site; it reads LIADGGIRTHGDIAKSIRFGASMV.

Belongs to the IMPDH/GMPR family. GuaC type 2 subfamily.

It catalyses the reaction IMP + NH4(+) + NADP(+) = GMP + NADPH + 2 H(+). Its function is as follows. Catalyzes the irreversible NADPH-dependent deamination of GMP to IMP. It functions in the conversion of nucleobase, nucleoside and nucleotide derivatives of G to A nucleotides, and in maintaining the intracellular balance of A and G nucleotides. This Staphylococcus aureus (strain JH9) protein is GMP reductase.